A 351-amino-acid polypeptide reads, in one-letter code: UDP-3-O-acylglucosamine N-acyltransferase (351 aa).

Catalysis depends on His240, which acts as the Proton acceptor.

It belongs to the transferase hexapeptide repeat family. LpxD subfamily. Homotrimer.

It catalyses the reaction a UDP-3-O-[(3R)-3-hydroxyacyl]-alpha-D-glucosamine + a (3R)-hydroxyacyl-[ACP] = a UDP-2-N,3-O-bis[(3R)-3-hydroxyacyl]-alpha-D-glucosamine + holo-[ACP] + H(+). It participates in bacterial outer membrane biogenesis; LPS lipid A biosynthesis. Its function is as follows. Catalyzes the N-acylation of UDP-3-O-acylglucosamine using 3-hydroxyacyl-ACP as the acyl donor. Is involved in the biosynthesis of lipid A, a phosphorylated glycolipid that anchors the lipopolysaccharide to the outer membrane of the cell. The polypeptide is UDP-3-O-acylglucosamine N-acyltransferase (Pseudomonas putida (strain ATCC 700007 / DSM 6899 / JCM 31910 / BCRC 17059 / LMG 24140 / F1)).